The primary structure comprises 314 residues: Protein phosphatase PTC7 homolog fig (314 aa).

The 267-residue stretch at 43 to 309 (PYLVTVVQGR…DDITLILSSV (267 aa)) folds into the PPM-type phosphatase domain. Asp-87, Gly-88, and Asp-232 together coordinate Mn(2+).

Belongs to the PP2C family. The cofactor is Mg(2+). Requires Mn(2+) as cofactor.

The enzyme catalyses O-phospho-L-seryl-[protein] + H2O = L-seryl-[protein] + phosphate. The catalysed reaction is O-phospho-L-threonyl-[protein] + H2O = L-threonyl-[protein] + phosphate. The chain is Protein phosphatase PTC7 homolog fig from Drosophila melanogaster (Fruit fly).